The sequence spans 154 residues: MAL-like protein (154 aa).

A run of 4 helical transmembrane segments spans residues 24-44 (LFLTIPFAFFLPELVFGFWVW), 61-81 (VLYVSLTSFLISLMFLMSYLF), 99-119 (GTTGILYMSASVLQAYATIIS), and 131-151 (VAASFFAFLTTLLYILHAFSI). Residues 24–154 (LFLTIPFAFF…ILHAFSIYYH (131 aa)) enclose the MARVEL domain.

The protein belongs to the MAL family.

The protein localises to the membrane. The sequence is that of MAL-like protein (Mall) from Mus musculus (Mouse).